The following is a 290-amino-acid chain: MKLSLLASVALVPFVSAHYFFDVLVIDGKETRSNEFVRSNTRPAKYNPTKWKNIRDDMTPDMPDFRCNKGAFTFAGQTGTAEVKAGSKLAMKLAVGATMQHPGPALVYMSKAPSSAKTYEGDGDWFKIHEEGVCNKNADFTKDAWCTWDKDRIEFTIPADLPDGEYLIRPEHIGLHGAHDGQAEFYYTCAQVKVVGGGTGTPGPTIKFPGGYKKDDPSFNFSLWNGYKDYPMPGPTVWTGGSGSGSSSYSKVANVTSSDESSQSGASSSQGTVSTCPNKYNRRHARQFKP.

The N-terminal stretch at 1-17 (MKLSLLASVALVPFVSA) is a signal peptide. Residues His-18 and His-101 each contribute to the Cu(2+) site. Cys-67 and Cys-189 are oxidised to a cystine. His-176 is an O2 binding site. Residue Tyr-187 participates in Cu(2+) binding. N-linked (GlcNAc...) asparagine glycosylation is found at Asn-220 and Asn-254. The disordered stretch occupies residues 240–290 (GGSGSGSSSYSKVANVTSSDESSQSGASSSQGTVSTCPNKYNRRHARQFKP). A compositionally biased stretch (low complexity) spans 245-275 (GSSSYSKVANVTSSDESSQSGASSSQGTVST). The segment covering 280–290 (YNRRHARQFKP) has biased composition (basic residues).

Belongs to the polysaccharide monooxygenase AA9 family. Cu(2+) is required as a cofactor.

It localises to the secreted. It catalyses the reaction [(1-&gt;4)-beta-D-glucosyl]n+m + reduced acceptor + O2 = 4-dehydro-beta-D-glucosyl-[(1-&gt;4)-beta-D-glucosyl]n-1 + [(1-&gt;4)-beta-D-glucosyl]m + acceptor + H2O.. Functionally, lytic polysaccharide monooxygenase (LPMO) that depolymerizes crystalline and amorphous polysaccharides via the oxidation of scissile alpha- or beta-(1-4)-glycosidic bonds, yielding exclusively C1 oxidation products. Catalysis by LPMOs requires the reduction of the active-site copper from Cu(II) to Cu(I) by a reducing agent and H(2)O(2) or O(2) as a cosubstrate. The sequence is that of AA9 family lytic polysaccharide monooxygenase A from Aspergillus fumigatus (strain ATCC MYA-4609 / CBS 101355 / FGSC A1100 / Af293) (Neosartorya fumigata).